We begin with the raw amino-acid sequence, 448 residues long: Phosphoglucosamine mutase (448 aa).

S102 serves as the catalytic Phosphoserine intermediate. Residues S102, D243, D245, and D247 each contribute to the Mg(2+) site. S102 carries the phosphoserine modification.

Belongs to the phosphohexose mutase family. Mg(2+) serves as cofactor. Activated by phosphorylation.

It catalyses the reaction alpha-D-glucosamine 1-phosphate = D-glucosamine 6-phosphate. Catalyzes the conversion of glucosamine-6-phosphate to glucosamine-1-phosphate. This is Phosphoglucosamine mutase from Parvibaculum lavamentivorans (strain DS-1 / DSM 13023 / NCIMB 13966).